A 215-amino-acid chain; its full sequence is ATP-dependent Clp protease proteolytic subunit 3 (215 aa).

Ser-119 functions as the Nucleophile in the catalytic mechanism. His-144 is a catalytic residue.

This sequence belongs to the peptidase S14 family. Fourteen ClpP subunits assemble into 2 heptameric rings which stack back to back to give a disk-like structure with a central cavity, resembling the structure of eukaryotic proteasomes.

It localises to the cytoplasm. It catalyses the reaction Hydrolysis of proteins to small peptides in the presence of ATP and magnesium. alpha-casein is the usual test substrate. In the absence of ATP, only oligopeptides shorter than five residues are hydrolyzed (such as succinyl-Leu-Tyr-|-NHMec, and Leu-Tyr-Leu-|-Tyr-Trp, in which cleavage of the -Tyr-|-Leu- and -Tyr-|-Trp bonds also occurs).. Functionally, cleaves peptides in various proteins in a process that requires ATP hydrolysis. Has a chymotrypsin-like activity. Plays a major role in the degradation of misfolded proteins. This Prochlorococcus marinus subsp. pastoris (strain CCMP1986 / NIES-2087 / MED4) protein is ATP-dependent Clp protease proteolytic subunit 3.